A 399-amino-acid polypeptide reads, in one-letter code: MSGSALYETFARAPLAFDHGEGTWLVTDKGERYLDFAGGIAVNSLGHSHPHLVAALTEQAAKLWHVSNLYEIPGQSRLGQRLVDATFADKVFFTNSGAEALECAIKTARRYHFVKGHPERFRVITFEGAFHGRTLATIAAGGQYKYLEGFGPKVEGFDQVGFDDIDAAEKAITPETAAILIEPVQGEGGIRPVPTQSLKRLRQLCDQHGLLLIYDEVQCGIGRTGKLFAHEWSGVAPDIMAIAKGIGGGFPMGACLATDEAAVGMTAGVHGTTFGGNPLAMAVGNAVLDVVLEDGFLEDVQRKALLMKQGLAAIADEFPDVVEDIRGTGLMLGLKCAMPNTKVNMALRDQHLLAVPAGDNVIRLLPPLTVTDAEIHEALNRIRAGAKGLADAIAVAAAK.

Residues 97 to 98 (GA) and Phe130 each bind pyridoxal 5'-phosphate. A N(2)-acetyl-L-ornithine-binding site is contributed by Arg133. Residue 215-218 (DEVQ) coordinates pyridoxal 5'-phosphate. Position 244 is an N6-(pyridoxal phosphate)lysine (Lys244). Residue Thr272 coordinates N(2)-acetyl-L-ornithine. Thr273 contributes to the pyridoxal 5'-phosphate binding site.

The protein belongs to the class-III pyridoxal-phosphate-dependent aminotransferase family. ArgD subfamily. As to quaternary structure, homodimer. Pyridoxal 5'-phosphate serves as cofactor.

It localises to the cytoplasm. The catalysed reaction is N(2)-acetyl-L-ornithine + 2-oxoglutarate = N-acetyl-L-glutamate 5-semialdehyde + L-glutamate. It participates in amino-acid biosynthesis; L-arginine biosynthesis; N(2)-acetyl-L-ornithine from L-glutamate: step 4/4. In Mesorhizobium japonicum (strain LMG 29417 / CECT 9101 / MAFF 303099) (Mesorhizobium loti (strain MAFF 303099)), this protein is Acetylornithine aminotransferase.